We begin with the raw amino-acid sequence, 91 residues long: Small ribosomal subunit protein uS15 (91 aa).

This sequence belongs to the universal ribosomal protein uS15 family. Part of the 30S ribosomal subunit. Forms a bridge to the 50S subunit in the 70S ribosome, contacting the 23S rRNA.

In terms of biological role, one of the primary rRNA binding proteins, it binds directly to 16S rRNA where it helps nucleate assembly of the platform of the 30S subunit by binding and bridging several RNA helices of the 16S rRNA. Its function is as follows. Forms an intersubunit bridge (bridge B4) with the 23S rRNA of the 50S subunit in the ribosome. The sequence is that of Small ribosomal subunit protein uS15 from Rickettsia africae (strain ESF-5).